Reading from the N-terminus, the 306-residue chain is MESTQSIGIRELLEAGVHFGHQAKRWNPKMKRYIFAERAGVHIIDLDQTLDLLERALNFIRGVAEAGQDVLFVGTKKQAQITIAEQAIRCGQPYVAERYIGGLLTNFRTIRPRIEYFKQLSREVEETPEEERSGKEWFARLREYQKLRRNFAGITEMERLPGAVYVVDPKREELLVREANRLRIPVVALTDTNCDPDVIDYVIPGNDDAIRSISLITRLIADAVIEGRGEESAAEERPVPPAVEEAQMVEEGRVPAGGEEQPGEPEAEAFEEAAGEPEDSTEEEAAEEQAASQAAPVGEGDESEER.

Over residues 229–238 the composition is skewed to basic and acidic residues; it reads GEESAAEERP. The segment at 229–306 is disordered; the sequence is GEESAAEERP…VGEGDESEER (78 aa). Acidic residues predominate over residues 261 to 287; sequence QPGEPEAEAFEEAAGEPEDSTEEEAAE.

This sequence belongs to the universal ribosomal protein uS2 family.

The protein is Small ribosomal subunit protein uS2 of Rubrobacter xylanophilus (strain DSM 9941 / JCM 11954 / NBRC 16129 / PRD-1).